Reading from the N-terminus, the 537-residue chain is ATP synthase subunit alpha (537 aa).

171-178 (GDRQTGKT) is an ATP binding site.

The protein belongs to the ATPase alpha/beta chains family. F-type ATPases have 2 components, CF(1) - the catalytic core - and CF(0) - the membrane proton channel. CF(1) has five subunits: alpha(3), beta(3), gamma(1), delta(1), epsilon(1). CF(0) has four main subunits: a, b, b' and c.

The protein resides in the cell inner membrane. The catalysed reaction is ATP + H2O + 4 H(+)(in) = ADP + phosphate + 5 H(+)(out). Functionally, produces ATP from ADP in the presence of a proton gradient across the membrane. The alpha chain is a regulatory subunit. The polypeptide is ATP synthase subunit alpha (Chloroherpeton thalassium (strain ATCC 35110 / GB-78)).